The primary structure comprises 297 residues: Phosphoribosylaminoimidazole-succinocarboxamide synthase (297 aa).

This sequence belongs to the SAICAR synthetase family.

It carries out the reaction 5-amino-1-(5-phospho-D-ribosyl)imidazole-4-carboxylate + L-aspartate + ATP = (2S)-2-[5-amino-1-(5-phospho-beta-D-ribosyl)imidazole-4-carboxamido]succinate + ADP + phosphate + 2 H(+). It functions in the pathway purine metabolism; IMP biosynthesis via de novo pathway; 5-amino-1-(5-phospho-D-ribosyl)imidazole-4-carboxamide from 5-amino-1-(5-phospho-D-ribosyl)imidazole-4-carboxylate: step 1/2. The chain is Phosphoribosylaminoimidazole-succinocarboxamide synthase (purC) from Mycobacterium leprae (strain TN).